Here is a 120-residue protein sequence, read N- to C-terminus: MASSMSLKLACVVVLCMVVGAPLAQGAVTSGQVTNSLAPCINYLRGSGAGAVPPGCCTGIKSLNSAAQTTPVRQAACRCIKSAAAGITGINFGLASGLPGKCGVNIPYKISPSTDCNSVK.

The N-terminal stretch at 1 to 26 is a signal peptide; that stretch reads MASSMSLKLACVVVLCMVVGAPLAQG. Disulfide bonds link C40/C56, C57/C102, and C77/C116.

This sequence belongs to the plant LTP family.

Plant non-specific lipid-transfer proteins transfer phospholipids as well as galactolipids across membranes. May play a role in wax or cutin deposition in the cell walls of expanding epidermal cells and certain secretory tissues. This is Non-specific lipid-transfer protein from Gossypium hirsutum (Upland cotton).